Reading from the N-terminus, the 282-residue chain is Secretory carrier-associated membrane protein 3 (282 aa).

The disordered stretch occupies residues 1-36; that stretch reads MAGKHGRNGFEDDDVNPFAGGSVPPANNSRLPPLSH. Residues 1 to 117 lie on the Cytoplasmic side of the membrane; that stretch reads MAGKHGRNGF…EIPIHLQRMQ (117 aa). The stretch at 48–92 forms a coiled coil; that stretch reads LDSSKDLKKKEKELQAMEAELNKRERELKRKEEAAAQAGIVIEDK. 4 helical membrane-spanning segments follow: residues 118–138, 148–168, 185–205, and 230–250; these read YLAF…IIAT, VIIW…AYVL, FGWF…AAVA, and IVGI…LLSI. Residues 251 to 282 are Cytoplasmic-facing; sequence GVIQQVYMYFRGSGKAAEMKREAARGALSSAF.

Belongs to the SCAMP family.

The protein resides in the cell membrane. The protein localises to the cytoplasmic vesicle. It localises to the secretory vesicle membrane. Its function is as follows. Probably involved in membrane trafficking. In Oryza sativa subsp. japonica (Rice), this protein is Secretory carrier-associated membrane protein 3 (SCAMP3).